We begin with the raw amino-acid sequence, 449 residues long: Hyaluronidase-1 (449 aa).

An N-terminal signal peptide occupies residues 1 to 23 (MYHIWIKFLAAWIFLKRFNGVHV). Cystine bridges form between Cys-47-Cys-340 and Cys-211-Cys-227. Asn-67, Asn-103, and Asn-111 each carry an N-linked (GlcNAc...) asparagine glycan. The active-site Proton donor is Glu-135. Asn-153 carries N-linked (GlcNAc...) asparagine glycosylation. Asn-357 is a glycosylation site (N-linked (GlcNAc...) asparagine). Disulfide bonds link Cys-365–Cys-376, Cys-370–Cys-427, and Cys-429–Cys-438. An N-linked (GlcNAc...) asparagine glycan is attached at Asn-401. The 12-residue stretch at 427 to 438 (CQCYQGWKGLYC) folds into the EGF-like domain.

It belongs to the glycosyl hydrolase 56 family. In terms of assembly, monomer. As to expression, expressed by the venom gland.

The protein localises to the secreted. The catalysed reaction is Random hydrolysis of (1-&gt;4)-linkages between N-acetyl-beta-D-glucosamine and D-glucuronate residues in hyaluronate.. Its function is as follows. Snake venom endo-hyaluronidase that degrades hyaluronan to smaller oligosaccharide fragments. In venom, it is not toxic by itself, but increases the diffusion of other venom proteins by degrading the extracellular matrix. In addition, it displays antiedematogenic activity. The chain is Hyaluronidase-1 from Cerastes cerastes (Horned desert viper).